The following is a 213-amino-acid chain: Transcriptional regulatory protein CrdR (213 aa).

The Response regulatory domain occupies 4 to 119; sequence KIFLLEDDYL…ELEARIKRFF (116 aa). Aspartate 53 carries the 4-aspartylphosphate modification. The segment at residues 121–212 is a DNA-binding region (ompR/PhoB-type); that stretch reads DDPIEIMPNI…HKGVGYRFNP (92 aa).

Post-translationally, phosphorylated by CrdS.

Member of the two-component regulatory system CrdR/CrdS that induces the transcriptional induction of the copper resistance determinant CrdA. Upon phosphorylation by CrdS, functions as a transcriptional regulator by direct binding to promoter regions of target genes including the crdA promoter or nitric oxide-responsive gene promoters. The polypeptide is Transcriptional regulatory protein CrdR (Helicobacter pylori (strain ATCC 700392 / 26695) (Campylobacter pylori)).